The following is a 165-amino-acid chain: Phosphopantetheine adenylyltransferase (165 aa).

S10 contributes to the substrate binding site. ATP-binding positions include S10–F11 and H18. Substrate-binding residues include K42, T79, and R93. ATP-binding positions include G94–R96, E104, and V129–T135.

The protein belongs to the bacterial CoaD family. As to quaternary structure, homohexamer. The cofactor is Mg(2+).

The protein resides in the cytoplasm. The enzyme catalyses (R)-4'-phosphopantetheine + ATP + H(+) = 3'-dephospho-CoA + diphosphate. It functions in the pathway cofactor biosynthesis; coenzyme A biosynthesis; CoA from (R)-pantothenate: step 4/5. Its function is as follows. Reversibly transfers an adenylyl group from ATP to 4'-phosphopantetheine, yielding dephospho-CoA (dPCoA) and pyrophosphate. This Nitrobacter winogradskyi (strain ATCC 25391 / DSM 10237 / CIP 104748 / NCIMB 11846 / Nb-255) protein is Phosphopantetheine adenylyltransferase.